The sequence spans 447 residues: NADH-quinone oxidoreductase subunit N (447 aa).

A run of 13 helical transmembrane segments spans residues 4–24, 27–47, 68–88, 92–112, 113–133, 146–166, 181–201, 215–235, 245–265, 280–300, 302–322, 342–362, and 376–395; these read FAAL…MLAA, LPGL…VALA, LTGL…RPDG, EGPA…GAVH, AASL…LFVL, FLIL…LGHA, ALLT…LALV, PGAA…TALV, VWAL…NLAA, VGHA…APAA, LFYI…AALI, GAAM…AGFF, and AWAL…YYYL.

Belongs to the complex I subunit 2 family. In terms of assembly, NDH-1 is composed of 14 different subunits. Subunits NuoA, H, J, K, L, M, N constitute the membrane sector of the complex.

Its subcellular location is the cell inner membrane. It catalyses the reaction a quinone + NADH + 5 H(+)(in) = a quinol + NAD(+) + 4 H(+)(out). Its function is as follows. NDH-1 shuttles electrons from NADH, via FMN and iron-sulfur (Fe-S) centers, to quinones in the respiratory chain. The immediate electron acceptor for the enzyme in this species is believed to be ubiquinone. Couples the redox reaction to proton translocation (for every two electrons transferred, four hydrogen ions are translocated across the cytoplasmic membrane), and thus conserves the redox energy in a proton gradient. This Cereibacter sphaeroides (strain ATCC 17025 / ATH 2.4.3) (Rhodobacter sphaeroides) protein is NADH-quinone oxidoreductase subunit N.